The chain runs to 213 residues: Skin granule protein (213 aa).

The first 26 residues, 1–26 (METMYHRFLCIPFLLILGLAQGQSKG), serve as a signal peptide directing secretion. Tandem repeats lie at residues 27–48 (LQTVTTFRTGLKPIDVTAIRTG), 49–70 (LQPIATFHTGQKPIDVTAIRTG), and 71–92 (LQPIATFHTGLQPVDVTAIRTG). The segment at 27–104 (LQTVTTFRTG…PIATFQTGVQ (78 aa)) is 4 X 22 AA approximate tandem repeats. The stretch at 93–104 (LQPIATFQTGVQ) is one 4; truncated repeat. A disordered region spans residues 162–213 (WHGGRNGHKMKKLGKKKHHKNRHGGKNHHKMKKIGKHHGGGRKFGKKHRHHK). Over residues 166–213 (RNGHKMKKLGKKKHHKNRHGGKNHHKMKKIGKHHGGGRKFGKKHRHHK) the composition is skewed to basic residues.

Its subcellular location is the secreted. The polypeptide is Skin granule protein (sgp) (Xenopus laevis (African clawed frog)).